Consider the following 492-residue polypeptide: Heat shock factor protein 4 (492 aa).

Residues 17–121 mediate DNA binding; sequence VPAFLGKLWA…QLLERVRRKV (105 aa). A hydrophobic repeat HR-A/B region spans residues 129–203; that stretch reads GRWRPEDLGR…GPLQAGPSNA (75 aa). Positions 245–322 are interactions with DUSP26, MAPK1 and MAPK2; it reads LPETNLGLSP…ECDFCVTAPP (78 aa). The disordered stretch occupies residues 246-285; that stretch reads PETNLGLSPHRARGPIISDIPEDSPSPEGTRLSPSSDGRR. Lysine 293 participates in a covalent cross-link: Glycyl lysine isopeptide (Lys-Gly) (interchain with G-Cter in SUMO). The residue at position 298 (serine 298) is a Phosphoserine. The segment at 337-400 is disordered; that stretch reads GSFSPEGPRN…PAGPLDVLGP (64 aa). The tract at residues 364 to 389 is hydrophobic repeat HR-C; that stretch reads LGLESGDRSPESLLPPMLLQPPQESV. Positions 374–388 are enriched in low complexity; that stretch reads ESLLPPMLLQPPQES.

This sequence belongs to the HSF family. As to quaternary structure, homotrimer. Exhibits constitutive DNA binding and forms trimers even in the absence of stress. Interacts with ALKBH4, DUSP26, MAPK1, MAPK2, MAPK8 and MAP kinase p38. In terms of processing, phosphorylated mainly on serine residues. Phosphorylation on Ser-298 promotes sumoylation on Lys-293. Isoform HSF4B is constitutively sumoylated. Sumoylation represses the transcriptional activity and is promoted by phosphorylation on Ser-298. HSFA is not sumoylated. As to expression, expressed in heart, skeletal muscle, eye and brain, and at much lower levels in some other tissues.

The protein localises to the nucleus. Its function is as follows. Heat-shock transcription factor that specifically binds heat shock promoter elements (HSE). Required for denucleation and organelle rupture and degradation that occur during eye lens terminal differentiation, when fiber cells that compose the lens degrade all membrane-bound organelles in order to provide lens with transparency to allow the passage of light. In this process, may regulate denucleation of lens fiber cells in part by activating DNASE2B transcription. May be involved in DNA repair through the transcriptional regulation of RAD51. May up-regulate p53/TP53 protein in eye lens fiber cells, possibly through protein stabilization. In the eye lens, controls the expression of alpha-crystallin B chain/CRYAB and consequently may be involved in the regulation of lysosomal acidification. In terms of biological role, transcriptional repressor. Transcriptional activator. This chain is Heat shock factor protein 4 (HSF4), found in Homo sapiens (Human).